Reading from the N-terminus, the 184-residue chain is Gremlin-1 (184 aa).

An N-terminal signal peptide occupies residues 1–24; it reads MNRTAYTVGALLLLLGTLLPTAEG. Residues 23–77 are disordered; that stretch reads EGKKKGSQGAIPPPDKAQHNDSEQTQSPPQPGSRTRGRGQGRGTAMPGEEVLESS. N-linked (GlcNAc...) asparagine glycosylation occurs at N42. 4 cysteine pairs are disulfide-bonded: C94–C144, C108–C158, C118–C176, and C122–C178. One can recognise a CTCK domain in the interval 94-184; that stretch reads CKTQPLKQTI…QCRCISIDLD (91 aa).

It belongs to the DAN family. Homodimer; can also form homooligomers. Interacts with BMP2; can form higher oligomers with BMP2. Interacts with SLIT1 and SLIT2 in a glycosylation-dependent manner. In terms of tissue distribution, highly expressed in spleen and to a lesser extent in lung, skeletal muscle and kidney. Expressed only in non-transformed cells or primary fibroblasts in culture but not in established transformed or tumor derived cell lines. Broadly expressed in limb bud mesenchyme but restricted to the distal limb bud mesenchyme and concentrated posteriorly. Expressed in ovary especially in granulosa cells of follicles of type 4.

It is found in the secreted. Its function is as follows. Cytokine that may play an important role during carcinogenesis and metanephric kidney organogenesis, as BMP a antagonist required for early limb outgrowth and patterning in maintaining the FGF4-SHH feedback loop. Down-regulates the BMP4 signaling in a dose-dependent manner. Antagonist of BMP2; inhibits BMP2-mediated differentiation of osteoblasts (in vitro). Acts as inhibitor of monocyte chemotaxis. This is Gremlin-1 (Grem1) from Mus musculus (Mouse).